A 143-amino-acid polypeptide reads, in one-letter code: Anti-sigma F factor (143 aa).

It belongs to the anti-sigma-factor family.

The catalysed reaction is L-seryl-[protein] + ATP = O-phospho-L-seryl-[protein] + ADP + H(+). The enzyme catalyses L-threonyl-[protein] + ATP = O-phospho-L-threonyl-[protein] + ADP + H(+). Functionally, binds to sigma F and blocks its ability to form an RNA polymerase holoenzyme (E-sigma F). Phosphorylates SpoIIAA on a serine residue. This phosphorylation may enable SpoIIAA to act as an anti-anti-sigma factor that counteracts SpoIIAB and thus releases sigma F from inhibition. This is Anti-sigma F factor from Clostridium botulinum (strain Alaska E43 / Type E3).